Here is a 156-residue protein sequence, read N- to C-terminus: MQHSQVSPNARQQLAETVVLNKARLGLSWQDLADGTGIALTLVTAAMFGQHALPEAAARKVAAQLGMDDDAVLLLQSIPLRGSIPGGIPSDPTIYRFYEMLQVYGSTLKALVHEQFGDGIISAINFKLDIKKVEDPEGGSRAVITLDGKYLPTKPF.

Residues Arg96, Glu99, and Ser122 contribute to the active site.

Belongs to the cyanase family.

The enzyme catalyses cyanate + hydrogencarbonate + 3 H(+) = NH4(+) + 2 CO2. Functionally, catalyzes the reaction of cyanate with bicarbonate to produce ammonia and carbon dioxide. This Pseudomonas aeruginosa (strain UCBPP-PA14) protein is Cyanate hydratase.